The chain runs to 234 residues: Orotidine 5'-phosphate decarboxylase (234 aa).

Substrate contacts are provided by residues aspartate 11, lysine 33, 60 to 69 (DLKFHDIPNT), threonine 120, arginine 181, glutamine 190, glycine 210, and arginine 211. Lysine 62 functions as the Proton donor in the catalytic mechanism.

It belongs to the OMP decarboxylase family. Type 1 subfamily. Homodimer.

It catalyses the reaction orotidine 5'-phosphate + H(+) = UMP + CO2. Its pathway is pyrimidine metabolism; UMP biosynthesis via de novo pathway; UMP from orotate: step 2/2. Functionally, catalyzes the decarboxylation of orotidine 5'-monophosphate (OMP) to uridine 5'-monophosphate (UMP). This chain is Orotidine 5'-phosphate decarboxylase, found in Aliivibrio fischeri (strain ATCC 700601 / ES114) (Vibrio fischeri).